We begin with the raw amino-acid sequence, 100 residues long: MRALTLLALLALAALCITGQAGAKPSGADSSKGAAFVSKQEGSEVVKRPRRYLYQWLGAPVPYPDPLEPKREVCELNPDCDELADHIGFQEAYRRFYGPV.

Positions M1–A23 are cleaved as a signal peptide. Residues K24–R51 constitute a propeptide that is removed on maturation. The region spanning Y52 to G98 is the Gla domain. Ca(2+) contacts are provided by E68, E72, E75, and D81. 3 positions are modified to 4-carboxyglutamate: E68, E72, and E75. A disulfide bridge links C74 with C80.

The protein belongs to the osteocalcin/matrix Gla protein family. In terms of processing, gamma-carboxyglutamate residues are formed by vitamin K dependent carboxylation by GGCX. These residues are essential for the binding of calcium. Decarboxylation promotes the hormone activity.

Its subcellular location is the secreted. The carboxylated form is one of the main organic components of the bone matrix, which constitutes 1-2% of the total bone protein: it acts as a negative regulator of bone formation and is required to limit bone formation without impairing bone resorption or mineralization. The carboxylated form binds strongly to apatite and calcium. In terms of biological role, the uncarboxylated form acts as a hormone secreted by osteoblasts, which regulates different cellular processes, such as energy metabolism, male fertility and brain development. Regulates of energy metabolism by acting as a hormone favoring pancreatic beta-cell proliferation, insulin secretion and sensitivity and energy expenditure. Uncarboxylated osteocalcin hormone also promotes testosterone production in the testes: acts as a ligand for G protein-coupled receptor GPRC6A at the surface of Leydig cells, initiating a signaling response that promotes the expression of enzymes required for testosterone synthesis in a CREB-dependent manner. Also acts as a regulator of brain development: osteocalcin hormone crosses the blood-brain barrier and acts as a ligand for GPR158 on neurons, initiating a signaling response that prevents neuronal apoptosis in the hippocampus, favors the synthesis of all monoamine neurotransmitters and inhibits that of gamma-aminobutyric acid (GABA). Osteocalcin also crosses the placenta during pregnancy and maternal osteocalcin is required for fetal brain development. The chain is Osteocalcin from Pongo pygmaeus (Bornean orangutan).